A 465-amino-acid chain; its full sequence is MATIHRLPSLVFLVLLALGVCSARRALLTLDAGYGLGHGTGGGYGGAAGSYGGGGGGGSGGGGGYAGEHGVVGYGGGSGGGQGGGVGYGGDQGAGYGGGGGSGGGGGVAYGGGGERGGYGGGQGGGAGGGYGAGGEHGIGYGGGGGSGAGGGGGYNAGGAQGGGYGTGGGAGGGGGGGGDHGGGYGGGQGAGGGAGGGYGGGGEHGGGGGGGQGGGAGGGYGAGGEHGGGAGGGQGGGAGGGYGAGGEHGGGAGGGQGGGAGGGYGAGGEHGGGAGGGQGGGAGGGYGAGGEHGGGAGGGQGGGAGGGYGAGGEHGGGGGGGQGGGAGGGYAAVGEHGGGYGGGQGGGDGGGYGTGGEHGGGYGGGQGGGAGGGYGTGGEHGGGYGGGQGGGGGYGAGGDHGAAGYGGGEGGGGGSGGGYGDGGAHGGGYGGGAGGGGGYGAGGAHGGGYGGGGGIGGGHGGNVP.

Residues 1–30 (MATIHRLPSLVFLVLLALGVCSARRALLTL) form the signal peptide. 8 repeat units span residues 205–226 (HGGG…AGGE), 227–248 (HGGG…AGGE), 249–270 (HGGG…AGGE), 271–292 (HGGG…AGGE), 293–314 (HGGG…AGGE), 315–336 (HGGG…AVGE), 337–358 (HGGG…TGGE), and 359–380 (HGGG…TGGE). Positions 205-380 (HGGGGGGGQG…AGGGYGTGGE (176 aa)) are 8 X 22 AA tandem repeats of H-G-G-G-[GAY]-G-G-G-Q-G-G-G-[AD]-G-G-G-Y-[GA]-[AT]-[GV]-G-E.

As to expression, expressed in young hypocotyls.

The protein localises to the secreted. Its subcellular location is the cell wall. Responsible for plasticity of the cell wall. The sequence is that of Glycine-rich cell wall structural protein 1.8 from Phaseolus vulgaris (Kidney bean).